Reading from the N-terminus, the 107-residue chain is UPF0060 membrane protein M446_5886 (107 aa).

A run of 4 helical transmembrane segments spans residues 4–24 (LLAY…IWAW), 31–51 (PLWL…LTRV), 59–79 (AYAA…WAAE), and 85–105 (RWDL…LLGP).

It belongs to the UPF0060 family.

The protein resides in the cell inner membrane. This Methylobacterium sp. (strain 4-46) protein is UPF0060 membrane protein M446_5886.